The chain runs to 367 residues: Nociceptin receptor (367 aa).

Topologically, residues 1–45 (MESLFPAPFWEVLYGSHFQGNLSLLNETVPHHLLLNASHSAFLPL) are extracellular. N-linked (GlcNAc...) asparagine glycans are attached at residues N21, N26, and N36. The chain crosses the membrane as a helical span at residues 46-71 (GLKVTIVGLYLAVCIGGLLGNCLVMY). The Cytoplasmic segment spans residues 72–84 (VILRHTKMKTATN). Residues 85-106 (IYIFNLALADTLVLLTLPFQGT) form a helical membrane-spanning segment. At 107–121 (DILLGFWPFGNALCK) the chain is on the extracellular side. Cysteines 120 and 197 form a disulfide. A helical membrane pass occupies residues 122–143 (TVIAIDYYNMFTSTFTLTAMSV). Residues 144-162 (DRYVAICHPIRALDVRTSS) are Cytoplasmic-facing. The chain crosses the membrane as a helical span at residues 163–185 (KAQAVNVAIWALASVVGVPVAIM). Topologically, residues 186 to 208 (GSAQVEDEEIECLVEIPAPQDYW) are extracellular. The chain crosses the membrane as a helical span at residues 209–233 (GPVFAICIFLFSFIIPVLIISVCYS). Residues 234 to 261 (LMIRRLRGVRLLSGSREKDRNLRRITRL) are Cytoplasmic-facing. The helical transmembrane segment at 262–282 (VLVVVAVFVGCWTPVQVFVLV) threads the bilayer. Topologically, residues 283–297 (QGLGVQPGSETAVAI) are extracellular. The chain crosses the membrane as a helical span at residues 298–319 (LRFCTALGYVNSCLNPILYAFL). The Cytoplasmic portion of the chain corresponds to 320 to 367 (DENFKACFRKFCCASALHREMQVSDRVRSIAKDVGLGCKTSETVPRPA). Residue C331 is the site of S-palmitoyl cysteine attachment.

It belongs to the G-protein coupled receptor 1 family. Post-translationally, phosphorylation at Ser-360 requires GRK3. In terms of tissue distribution, in the brain, isoform KOR3 and isoform KOR3C are most abundant in hypothalamus and periaqueductal gray. Isoform KOR3A is highly expressed in cortex, striatum and brainstem. Isoform KOR3D is highly expressed in cerebellum, hypothalamus and brainstem. Detected in spleen lymphocytes.

It is found in the cell membrane. The protein localises to the cytoplasmic vesicle. G-protein coupled opioid receptor that functions as a receptor for the endogenous neuropeptide nociceptin. Ligand binding causes a conformation change that triggers signaling via guanine nucleotide-binding proteins (G proteins) and modulates the activity of down-stream effectors. Signaling via G proteins mediates inhibition of adenylate cyclase activity and calcium channel activity. Arrestins modulate signaling via G proteins and mediate the activation of alternative signaling pathways that lead to the activation of MAP kinases. Plays a role in modulating nociception and the perception of pain. Plays a role in the regulation of locomotor activity by the neuropeptide nociceptin. The polypeptide is Nociceptin receptor (Oprl1) (Mus musculus (Mouse)).